The sequence spans 502 residues: Glycerol kinase (502 aa).

Residue Thr14 coordinates ADP. The ATP site is built by Thr14, Thr15, and Ser16. Thr14 contributes to the sn-glycerol 3-phosphate binding site. Arg18 provides a ligand contact to ADP. 3 residues coordinate sn-glycerol 3-phosphate: Arg84, Glu85, and Tyr136. Glycerol contacts are provided by Arg84, Glu85, and Tyr136. At His232 the chain carries Phosphohistidine; by HPr. Residue Asp246 participates in sn-glycerol 3-phosphate binding. The glycerol site is built by Asp246 and Gln247. ADP is bound by residues Thr268 and Gly311. The ATP site is built by Thr268, Gly311, Gln315, and Gly412. Gly412 and Asn416 together coordinate ADP.

The protein belongs to the FGGY kinase family. In terms of assembly, homotetramer and homodimer (in equilibrium). In terms of processing, the phosphoenolpyruvate-dependent sugar phosphotransferase system (PTS), including enzyme I, and histidine-containing protein (HPr) are required for the phosphorylation, which leads to the activation of the enzyme.

It catalyses the reaction glycerol + ATP = sn-glycerol 3-phosphate + ADP + H(+). It functions in the pathway polyol metabolism; glycerol degradation via glycerol kinase pathway; sn-glycerol 3-phosphate from glycerol: step 1/1. Its activity is regulated as follows. Activated by phosphorylation and inhibited by fructose 1,6-bisphosphate (FBP). Functionally, key enzyme in the regulation of glycerol uptake and metabolism. Catalyzes the phosphorylation of glycerol to yield sn-glycerol 3-phosphate. The sequence is that of Glycerol kinase from Streptococcus sanguinis (strain SK36).